The chain runs to 254 residues: MSAPEAQQQKRGGFGGRNRGRPNRRGPRNTEEKGWVPVTKLGRLVKAGKITTIEEIFLHSLPVKEFQIIDTLLPGLQDEVMNIKPVQKQTRAGQRTRFKAVVVVGDSNGHVGLGIKTAKEVAGAIRAGIIIAKLSVIPIRRGYWGTNLGQPHSLATKTTGKCGSVTVRLIPAPRGSGIVASPAVKKLLQLAGVEDVYTQSNGKTRTLENTLKAAFVAIGNTYGFLTPNLWAEQPLPVSPLDIYSDEASAQKKRF.

Residues 1–10 show a composition bias toward polar residues; that stretch reads MSAPEAQQQK. The tract at residues 1–34 is disordered; it reads MSAPEAQQQKRGGFGGRNRGRPNRRGPRNTEEKG. At serine 2 the chain carries N-acetylserine. Residue arginine 11 is modified to Asymmetric dimethylarginine; by HMT1; alternate. Arginine 11 bears the Omega-N-methylarginine; by HMT1; alternate mark. Arginine 17 is modified (omega-N-methylarginine; by HMT1). Residues 18–27 are compositionally biased toward basic residues; that stretch reads NRGRPNRRGP. Lysine 33 is covalently cross-linked (Glycyl lysine isopeptide (Lys-Gly) (interchain with G-Cter in ubiquitin)). The S5 DRBM domain occupies 76–139; it reads LQDEVMNIKP…IIAKLSVIPI (64 aa).

This sequence belongs to the universal ribosomal protein uS5 family. As to quaternary structure, component of the small ribosomal subunit (SSU). Mature yeast ribosomes consist of a small (40S) and a large (60S) subunit. The 40S small subunit contains 1 molecule of ribosomal RNA (18S rRNA) and 33 different proteins (encoded by 57 genes). The large 60S subunit contains 3 rRNA molecules (25S, 5.8S and 5S rRNA) and 46 different proteins (encoded by 81 genes). Interacts with snoRNA U3. Interacts with MPP10. Component of the ribosomal small subunit (SSU) processome composed of at least 40 protein subunits and snoRNA U3. N-terminally acetylated by acetyltransferase NatA.

It is found in the cytoplasm. Its subcellular location is the nucleus. It localises to the nucleolus. Component of the ribosome, a large ribonucleoprotein complex responsible for the synthesis of proteins in the cell. The small ribosomal subunit (SSU) binds messenger RNAs (mRNAs) and translates the encoded message by selecting cognate aminoacyl-transfer RNA (tRNA) molecules. The large subunit (LSU) contains the ribosomal catalytic site termed the peptidyl transferase center (PTC), which catalyzes the formation of peptide bonds, thereby polymerizing the amino acids delivered by tRNAs into a polypeptide chain. The nascent polypeptides leave the ribosome through a tunnel in the LSU and interact with protein factors that function in enzymatic processing, targeting, and the membrane insertion of nascent chains at the exit of the ribosomal tunnel. uS5 is important for the assembly and function of the 40S ribosomal subunit. Mutations in this protein affects the control of translational fidelity. Involved in nucleolar processing of pre-18S ribosomal RNA and ribosome assembly. This Saccharomyces cerevisiae (strain ATCC 204508 / S288c) (Baker's yeast) protein is Small ribosomal subunit protein uS5.